Here is a 160-residue protein sequence, read N- to C-terminus: 6,7-dimethyl-8-ribityllumazine synthase (160 aa).

5-amino-6-(D-ribitylamino)uracil-binding positions include Trp28, 59–61, and 82–84; these read SFE and VII. 87–88 provides a ligand contact to (2S)-2-hydroxy-3-oxobutyl phosphate; sequence GT. His90 serves as the catalytic Proton donor. Phe115 provides a ligand contact to 5-amino-6-(D-ribitylamino)uracil. Position 129 (Arg129) interacts with (2S)-2-hydroxy-3-oxobutyl phosphate.

The protein belongs to the DMRL synthase family.

The catalysed reaction is (2S)-2-hydroxy-3-oxobutyl phosphate + 5-amino-6-(D-ribitylamino)uracil = 6,7-dimethyl-8-(1-D-ribityl)lumazine + phosphate + 2 H2O + H(+). The protein operates within cofactor biosynthesis; riboflavin biosynthesis; riboflavin from 2-hydroxy-3-oxobutyl phosphate and 5-amino-6-(D-ribitylamino)uracil: step 1/2. Catalyzes the formation of 6,7-dimethyl-8-ribityllumazine by condensation of 5-amino-6-(D-ribitylamino)uracil with 3,4-dihydroxy-2-butanone 4-phosphate. This is the penultimate step in the biosynthesis of riboflavin. The polypeptide is 6,7-dimethyl-8-ribityllumazine synthase (Clavibacter michiganensis subsp. michiganensis (strain NCPPB 382)).